The following is a 254-amino-acid chain: Urease accessory protein UreD (254 aa).

This sequence belongs to the UreD family. UreD, UreF and UreG form a complex that acts as a GTP-hydrolysis-dependent molecular chaperone, activating the urease apoprotein by helping to assemble the nickel containing metallocenter of UreC. The UreE protein probably delivers the nickel.

Its subcellular location is the cytoplasm. In terms of biological role, required for maturation of urease via the functional incorporation of the urease nickel metallocenter. The sequence is that of Urease accessory protein UreD from Streptomyces coelicolor (strain ATCC BAA-471 / A3(2) / M145).